The following is an 84-amino-acid chain: Small ribosomal subunit protein bS18 (84 aa).

This sequence belongs to the bacterial ribosomal protein bS18 family. Part of the 30S ribosomal subunit. Forms a tight heterodimer with protein bS6.

Functionally, binds as a heterodimer with protein bS6 to the central domain of the 16S rRNA, where it helps stabilize the platform of the 30S subunit. In Vesicomyosocius okutanii subsp. Calyptogena okutanii (strain HA), this protein is Small ribosomal subunit protein bS18.